The sequence spans 106 residues: L-rhamnose mutarotase (106 aa).

Tyr20 provides a ligand contact to substrate. The active-site Proton donor is the His24. Residues Tyr43 and 78–79 (WW) contribute to the substrate site.

It belongs to the rhamnose mutarotase family. Homodimer.

Its subcellular location is the cytoplasm. The catalysed reaction is alpha-L-rhamnose = beta-L-rhamnose. The protein operates within carbohydrate metabolism; L-rhamnose metabolism. Involved in the anomeric conversion of L-rhamnose. In Verminephrobacter eiseniae (strain EF01-2), this protein is L-rhamnose mutarotase.